A 347-amino-acid chain; its full sequence is Fructose-1,6-bisphosphatase (347 aa).

Residues 19–23 (ILQEQ) and 44–48 (SGELS) each bind AMP. Residues D85 and E114 each coordinate Mg(2+). 127 to 128 (SY) contributes to the AMP binding site. Mg(2+) contacts are provided by D133, I135, and D136. 136-139 (DGSS) provides a ligand contact to substrate. Residue K155 coordinates AMP. Residues 227 to 230 (NEGY), 258 to 263 (RYIGSM), Y279, and 288 to 290 (KLR) each bind substrate. Position 294 (E294) interacts with Mg(2+).

It belongs to the FBPase class 1 family. Homotetramer. It depends on Mg(2+) as a cofactor.

The catalysed reaction is beta-D-fructose 1,6-bisphosphate + H2O = beta-D-fructose 6-phosphate + phosphate. It participates in carbohydrate biosynthesis; gluconeogenesis. Subject to complex allosteric regulation. The enzyme can assume an active R-state, or an inactive T-state. Intermediate conformations may exist. AMP acts as allosteric inhibitor. AMP binding affects the turnover of bound substrate and not the affinity for substrate. The sequence is that of Fructose-1,6-bisphosphatase (fbp1) from Schizosaccharomyces pombe (strain 972 / ATCC 24843) (Fission yeast).